Consider the following 404-residue polypeptide: Tryptophan synthase beta chain (404 aa).

Lysine 91 is modified (N6-(pyridoxal phosphate)lysine).

The protein belongs to the TrpB family. In terms of assembly, tetramer of two alpha and two beta chains. The cofactor is pyridoxal 5'-phosphate.

The catalysed reaction is (1S,2R)-1-C-(indol-3-yl)glycerol 3-phosphate + L-serine = D-glyceraldehyde 3-phosphate + L-tryptophan + H2O. It participates in amino-acid biosynthesis; L-tryptophan biosynthesis; L-tryptophan from chorismate: step 5/5. The beta subunit is responsible for the synthesis of L-tryptophan from indole and L-serine. The protein is Tryptophan synthase beta chain of Clavibacter michiganensis subsp. michiganensis (strain NCPPB 382).